The chain runs to 383 residues: UPF0425 pyridoxal phosphate-dependent protein Msp_0916 (383 aa).

Residue Lys-207 is modified to N6-(pyridoxal phosphate)lysine.

This sequence belongs to the UPF0425 family. It depends on pyridoxal 5'-phosphate as a cofactor.

This Methanosphaera stadtmanae (strain ATCC 43021 / DSM 3091 / JCM 11832 / MCB-3) protein is UPF0425 pyridoxal phosphate-dependent protein Msp_0916.